A 194-amino-acid polypeptide reads, in one-letter code: MAQLFFKYGAMNSGKTIEILKVAHNYEEQDKPVVLMTSGLDTRDGVGKVSSRIGLRRDAIPIFEETNVFDLINDLSYKPFCVLVDECQFLNKHHVIEFARIVDELDIPVMAFGLKNDFRNELFEGSKYLLLYADKLEELKTICWFCHKKATMNLHYIDGNPVYEGDQVQIGGNEAYYPVCRKHYFHPKTVNEEQ.

Residues 9–16 (GAMNSGKT) and 85–88 (DECQ) contribute to the ATP site. Glu-86 functions as the Proton acceptor in the catalytic mechanism. Cys-143, Cys-146, Cys-180, and His-183 together coordinate Zn(2+).

It belongs to the thymidine kinase family. Homotetramer.

The protein localises to the cytoplasm. The catalysed reaction is thymidine + ATP = dTMP + ADP + H(+). This Enterococcus faecalis (strain ATCC 700802 / V583) protein is Thymidine kinase.